The sequence spans 166 residues: Ribosome maturation factor RimM (166 aa).

A PRC barrel domain is found at 92 to 164; sequence EGVYYDFQLI…KIIIDPIPGL (73 aa).

This sequence belongs to the RimM family. Binds ribosomal protein uS19.

Its subcellular location is the cytoplasm. Its function is as follows. An accessory protein needed during the final step in the assembly of 30S ribosomal subunit, possibly for assembly of the head region. Essential for efficient processing of 16S rRNA. May be needed both before and after RbfA during the maturation of 16S rRNA. It has affinity for free ribosomal 30S subunits but not for 70S ribosomes. In Dehalococcoides mccartyi (strain CBDB1), this protein is Ribosome maturation factor RimM.